Consider the following 118-residue polypeptide: Large ribosomal subunit protein bL19 (118 aa).

The protein belongs to the bacterial ribosomal protein bL19 family.

Its function is as follows. This protein is located at the 30S-50S ribosomal subunit interface and may play a role in the structure and function of the aminoacyl-tRNA binding site. The chain is Large ribosomal subunit protein bL19 from Saccharophagus degradans (strain 2-40 / ATCC 43961 / DSM 17024).